Reading from the N-terminus, the 239-residue chain is Terpene cyclase idtB (239 aa).

The next 5 helical transmembrane spans lie at 20 to 40 (MADT…ALMI), 50 to 70 (CMAL…TIVY), 75 to 95 (RVEL…MVGA), 113 to 133 (AGFI…ALAM), and 138 to 158 (GLAY…GGLF). Asn-164 carries an N-linked (GlcNAc...) asparagine glycan. A helical membrane pass occupies residues 197–217 (EVFGWLASPLVLWSLVTFLLA).

The protein belongs to the paxB family.

It is found in the membrane. It participates in secondary metabolite biosynthesis. Functionally, terpene cyclase; part of the gene cluster that mediates the biosynthesis of paspalitrems, indole-diterpene (IDT) mycotoxins that are potent tremorgens in mammals. The geranylgeranyl diphosphate (GGPP) synthase idtG is proposed to catalyze the first step in IDT biosynthesis via catalysis of a series of iterative condensations of isopentenyl diphosphate (IPP) with dimethylallyl diphosphate (DMAPP), geranyl diphosphate (GPP), and farnesyl diphosphate (FPP), to form GGPP. Condensation of indole-3-glycerol phosphate with GGPP by the prenyltransferase idtC then forms 3-geranylgeranylindole (3-GGI). Epoxidation of the two terminal alkenes of the geranylgeranyl moiety by the FAD-dependent monooxygenase idtM, and cyclization by the terpene cyclase idtB then leads to the production of paspaline. The cytochrome P450 monooxygenase idtP then catalyzes oxidative elimination of the pendant methyl group at C-12 of paspaline and generates the C-10 ketone to yield 13-desoxypaxilline. The cytochrome P450 monooxygenase idtQ may catalyze the C-13 oxidation of 13-desoxypaxilline to afford paxilline. Considering that both paspalicine and paxilline were detected in C.paspali, idtQ also catalyzes the formation of paspalinine from 13-desoxypaxilline via paspalicine as an intermediate. Finally, the alpha-prenyltransferase idtF prenylates paspalinine at the C-20 or the C-21 positions to yield paspalitrems A and C, respectively. The hydroxylation of paspalitrem A at C-32 by a still unknown oxidase affords paspalitrem B. The sequence is that of Terpene cyclase idtB from Claviceps paspali (Rye ergot fungus).